Consider the following 64-residue polypeptide: Neurotoxin BmK-II (64 aa).

In terms of domain architecture, LCN-type CS-alpha/beta spans 2–64; it reads RDAYIAKPHN…VPIRIPGNCH (63 aa). 4 cysteine pairs are disulfide-bonded: cysteine 12/cysteine 63, cysteine 16/cysteine 36, cysteine 22/cysteine 46, and cysteine 26/cysteine 48.

Belongs to the long (4 C-C) scorpion toxin superfamily. Sodium channel inhibitor family. Alpha subfamily. As to expression, expressed by the venom gland.

The protein localises to the secreted. In terms of biological role, binds to sodium channels (Nav) and inhibits the inactivation of the activated channels, thereby blocking neuronal transmission. This toxin is active against mammals and insects. BmK-II is 6-fold less toxic than BmK-I. The sequence is that of Neurotoxin BmK-II from Olivierus martensii (Manchurian scorpion).